We begin with the raw amino-acid sequence, 858 residues long: Leucine--tRNA ligase (858 aa).

The 'HIGH' region signature appears at 43–54 (PYPSGDGLHVGH). Residues 629-633 (KMSKS) carry the 'KMSKS' region motif. Lysine 632 serves as a coordination point for ATP.

Belongs to the class-I aminoacyl-tRNA synthetase family.

It localises to the cytoplasm. It carries out the reaction tRNA(Leu) + L-leucine + ATP = L-leucyl-tRNA(Leu) + AMP + diphosphate. This is Leucine--tRNA ligase from Treponema denticola (strain ATCC 35405 / DSM 14222 / CIP 103919 / JCM 8153 / KCTC 15104).